The primary structure comprises 216 residues: Protein YabP (216 aa).

The sequence is that of Protein YabP (yabP) from Escherichia coli (strain K12).